The primary structure comprises 293 residues: Ethanolamine ammonia-lyase small subunit (293 aa).

Residues valine 207 and glutamate 228 each contribute to the adenosylcob(III)alamin site.

The protein belongs to the EutC family. The basic unit is a heterodimer which dimerizes to form tetramers. The heterotetramers trimerize; 6 large subunits form a core ring with 6 small subunits projecting outwards. Adenosylcob(III)alamin is required as a cofactor.

It is found in the bacterial microcompartment. The enzyme catalyses ethanolamine = acetaldehyde + NH4(+). It functions in the pathway amine and polyamine degradation; ethanolamine degradation. Its function is as follows. Catalyzes the deamination of various vicinal amino-alcohols to oxo compounds. Allows this organism to utilize ethanolamine as the sole source of nitrogen and carbon in the presence of external vitamin B12. The polypeptide is Ethanolamine ammonia-lyase small subunit (Listeria innocua serovar 6a (strain ATCC BAA-680 / CLIP 11262)).